The following is a 247-amino-acid chain: Acetate transporter protein patA (247 aa).

N-linked (GlcNAc...) asparagine glycosylation is present at asparagine 20. Helical transmembrane passes span 37–57 (PPITPIGSPTALGMGAFAIAF), 71–91 (AITNAYIGNCFFTAGLGLVLV), 106–126 (VFGGFGLFNLAFGAINAPAFG), 141–161 (ALGYFLLVWGVFVLFFTIAAM), 169–189 (AMLGTSQITYTLLAASYFAMA), and 202–222 (AAGAFGFVSGLLAWYVVAHLM).

This sequence belongs to the acetate uptake transporter (AceTr) (TC 2.A.96) family.

It localises to the endoplasmic reticulum membrane. The protein operates within mycotoxin biosynthesis; patulin biosynthesis. Functionally, acetate transporter protein; part of the gene cluster that mediates the biosynthesis of patulin, an acetate-derived tetraketide mycotoxin produced by several fungal species that shows antimicrobial properties against several bacteria. May be involved in the uptake of acetate, a substrate for the synthesis of 6-methylsalicylic acid by the polyketide synthase patK. This Aspergillus clavatus (strain ATCC 1007 / CBS 513.65 / DSM 816 / NCTC 3887 / NRRL 1 / QM 1276 / 107) protein is Acetate transporter protein patA.